Here is a 156-residue protein sequence, read N- to C-terminus: UPF0039 protein Mb2876c (156 aa).

Residues 8 to 150 (VWAKDLDARA…PHVPMLRPGS (143 aa)) form the N-acetyltransferase domain.

Belongs to the UPF0039 (ElaA) family.

This Mycobacterium bovis (strain ATCC BAA-935 / AF2122/97) protein is UPF0039 protein Mb2876c.